Reading from the N-terminus, the 406-residue chain is S-adenosylmethionine synthase (406 aa).

141–146 is a binding site for ATP; it reads GQGSMD.

Belongs to the AdoMet synthase 2 family. In terms of assembly, homodimer. Requires Mg(2+) as cofactor.

The enzyme catalyses L-methionine + ATP + H2O = S-adenosyl-L-methionine + phosphate + diphosphate. The protein operates within amino-acid biosynthesis; S-adenosyl-L-methionine biosynthesis; S-adenosyl-L-methionine from L-methionine: step 1/1. In terms of biological role, catalyzes the formation of S-adenosylmethionine from methionine and ATP. The polypeptide is S-adenosylmethionine synthase (mat) (Methanocaldococcus jannaschii (strain ATCC 43067 / DSM 2661 / JAL-1 / JCM 10045 / NBRC 100440) (Methanococcus jannaschii)).